The sequence spans 481 residues: Tryptophan--tRNA ligase, cytoplasmic (481 aa).

A WHEP-TRS domain is found at 12–68 (SPLELFNSIAAQGELVRSLKAGNAPKDEIESAVKMLLSLKMNYKTAMGEEYKAGCPP). Residues 65 to 85 (GCPPGNSTAGSNGDPDATKAS) form a disordered region. At K158 the chain carries N6-succinyllysine. The 'HIGH' region signature appears at 168–177 (PSSEAMHLGH). Positions 353 to 357 (KMSAS) match the 'KMSKS' region motif. S355 is modified (phosphoserine).

The protein belongs to the class-I aminoacyl-tRNA synthetase family. In terms of assembly, homodimer. Interacts with oxidized form of GAPDH. Post-translationally, proteolytic cleavage generates 2 forms; T1-TrpRS and T2-TrpRS.

The protein localises to the cytoplasm. The enzyme catalyses tRNA(Trp) + L-tryptophan + ATP = L-tryptophyl-tRNA(Trp) + AMP + diphosphate + H(+). In terms of biological role, catalyzes the attachment of tryptophan to tRNA(Trp) in a two-step reaction: tryptophan is first activated by ATP to form Trp-AMP and then transferred to the acceptor end of the tRNA(Trp). Could also possess an angiostatic activity. The protein is Tryptophan--tRNA ligase, cytoplasmic of Rattus norvegicus (Rat).